We begin with the raw amino-acid sequence, 63 residues long: Large ribosomal subunit protein bL28 (63 aa).

The protein belongs to the bacterial ribosomal protein bL28 family.

The protein is Large ribosomal subunit protein bL28 of Sulfurihydrogenibium sp. (strain YO3AOP1).